The primary structure comprises 344 residues: Methylthioribose-1-phosphate isomerase (344 aa).

Substrate is bound by residues 46–48 (RGA), Arg-89, and Gln-196. Catalysis depends on Asp-237, which acts as the Proton donor. Position 247 to 248 (247 to 248 (NK)) interacts with substrate.

The protein belongs to the eIF-2B alpha/beta/delta subunits family. MtnA subfamily.

The enzyme catalyses 5-(methylsulfanyl)-alpha-D-ribose 1-phosphate = 5-(methylsulfanyl)-D-ribulose 1-phosphate. The protein operates within amino-acid biosynthesis; L-methionine biosynthesis via salvage pathway; L-methionine from S-methyl-5-thio-alpha-D-ribose 1-phosphate: step 1/6. Functionally, catalyzes the interconversion of methylthioribose-1-phosphate (MTR-1-P) into methylthioribulose-1-phosphate (MTRu-1-P). In Syntrophotalea carbinolica (strain DSM 2380 / NBRC 103641 / GraBd1) (Pelobacter carbinolicus), this protein is Methylthioribose-1-phosphate isomerase.